The following is a 206-amino-acid chain: LysM and putative peptidoglycan-binding domain-containing protein 2 (206 aa).

One can recognise a LysM domain in the interval 59–103; the sequence is IEHCLSPSDTLQGIALKYGVTMEQIKRANKLFSTDCIFLRKSLNI. Residues 184-206 are disordered; the sequence is AQRLKEEDDLRHDGSYATCSYQH. Basic and acidic residues predominate over residues 186-197; the sequence is RLKEEDDLRHDG.

This chain is LysM and putative peptidoglycan-binding domain-containing protein 2 (lysmd2), found in Xenopus laevis (African clawed frog).